Here is a 542-residue protein sequence, read N- to C-terminus: Chaperonin GroEL (542 aa).

ATP is bound by residues 29-32 (TMGP), Lys50, 86-90 (DGTTT), Gly414, 477-479 (NAA), and Asp493.

It belongs to the chaperonin (HSP60) family. Forms a cylinder of 14 subunits composed of two heptameric rings stacked back-to-back. Interacts with the co-chaperonin GroES.

Its subcellular location is the cytoplasm. It carries out the reaction ATP + H2O + a folded polypeptide = ADP + phosphate + an unfolded polypeptide.. Functionally, together with its co-chaperonin GroES, plays an essential role in assisting protein folding. The GroEL-GroES system forms a nano-cage that allows encapsulation of the non-native substrate proteins and provides a physical environment optimized to promote and accelerate protein folding. The sequence is that of Chaperonin GroEL from Sulfurovum sp. (strain NBC37-1).